A 235-amino-acid chain; its full sequence is Putative cobalt transport protein CbiM 2 (235 aa).

7 consecutive transmembrane segments (helical) span residues 8-28 (LPAIWCIVWFVVSIPVVAYGV), 40-60 (GILPVLAVAGAFIFVLSSLKM), 74-94 (GIGAIIFGPAITAVLSTIVLI), 107-127 (TLGANVFSMGIVGPIVAYLIY), 135-155 (LNFYLIVFLAATLGDWATYIV), 160-180 (LALAFPAGDILTFGGFFSSFS), and 185-205 (IFAITQVPLAIVEGAVSALLF).

It belongs to the CbiM family. In terms of assembly, forms an energy-coupling factor (ECF) transporter complex composed of an ATP-binding protein (A component, CbiO), a transmembrane protein (T component, CbiQ) and 2 possible substrate-capture proteins (S components, CbiM and CbiN) of unknown stoichimetry.

The protein localises to the cell membrane. It functions in the pathway cofactor biosynthesis; adenosylcobalamin biosynthesis. Part of the energy-coupling factor (ECF) transporter complex CbiMNOQ involved in cobalt import. In Methanosarcina barkeri (strain Fusaro / DSM 804), this protein is Putative cobalt transport protein CbiM 2.